A 796-amino-acid polypeptide reads, in one-letter code: Exocyst complex component 3 (796 aa).

A coiled-coil region spans residues Pro87–Leu174.

Belongs to the SEC6 family. As to quaternary structure, the exocyst complex is composed of sec-3/exoc1, sec-5/exoc2, sec-6/exoc3, sec-8/exoc4, sec-10/exoc5, sec-15/exoc6, exo-70/exoc7 and exo-84/exoc8.

Component of the exocyst complex involved in the docking of exocytic vesicles with fusion sites on the plasma membrane. This is Exocyst complex component 3 (sec-6) from Caenorhabditis elegans.